The primary structure comprises 169 residues: Cilia- and flagella-associated protein 68 (169 aa).

Mn stretches follow at residues 98 to 109 (TTYDTSYNNRRP) and 139 to 149 (KSTYMTSYSKP).

It belongs to the CFAP68 family. As to quaternary structure, microtubule inner protein component of sperm flagellar doublet microtubules.

Its subcellular location is the cytoplasm. It is found in the cytoskeleton. The protein localises to the cilium axoneme. The protein resides in the flagellum axoneme. It localises to the nucleus. Its subcellular location is the cell projection. It is found in the cilium. Functionally, microtubule inner protein (MIP) part of the dynein-decorated doublet microtubules (DMTs) in cilia axoneme, which is required for motile cilia beating. This is Cilia- and flagella-associated protein 68 (CFAP68) from Bos taurus (Bovine).